The primary structure comprises 306 residues: tRNA dimethylallyltransferase (306 aa).

Residue 14-21 participates in ATP binding; sequence GPTAAGKS. 16–21 serves as a coordination point for substrate; the sequence is TAAGKS. The segment at 39 to 42 is interaction with substrate tRNA; that stretch reads DSRL.

Belongs to the IPP transferase family. As to quaternary structure, monomer. Requires Mg(2+) as cofactor.

It carries out the reaction adenosine(37) in tRNA + dimethylallyl diphosphate = N(6)-dimethylallyladenosine(37) in tRNA + diphosphate. Catalyzes the transfer of a dimethylallyl group onto the adenine at position 37 in tRNAs that read codons beginning with uridine, leading to the formation of N6-(dimethylallyl)adenosine (i(6)A). This Synechococcus sp. (strain ATCC 27144 / PCC 6301 / SAUG 1402/1) (Anacystis nidulans) protein is tRNA dimethylallyltransferase.